The sequence spans 727 residues: MASCPDSDNSWVLAGSENLPVETLGPEPRMDPESEGASQALRDSSKADGKELAGTLDGEEKLFQTESSQRETAVLTESAAKGTLGADGHGTEAPGDTVVQEDSQETPVATSLGPDTQDLESEIHPQNLPSSPRAVWKEHRCSSSDDDTDVDVEGLRRRRGREPSSSQPVVPVDVEDQAKGEGIGGELGISLNMCFLGALVLLGLGILLFSGTLLEPETGPMEEAELQVFPETGPETELVETLGNRQDEIEHLQASSVPPDSVPSLQSMGFLLDKLAKENQDIRLLQAQLQAQKEELQSLLHQPKGLEEENARLREALQQGKTSHQALESELQQLRARLQGLEANCVRGVDGVCLNWGGDPQDGKATKEQGHKGQEPDPSLLEQHKQLEAEAKALRQELQRQWQLLGSVHWDLQRGLRDAGRGAPAHPGLAELGHMLAQTLQDLENQGINTGRSPNDSEAWHQKKPHTQSPREWGGKEKWRGGQRDQKAEHWKPRKEESGQERQRSWRDEGREHTGRWREDRLRADESGSRKDSKRQDPKVHPRKDGNSHSVERQKHSWGKDNSPDALSSWEELLRRKYRPPQGCSGVADCARQEGLALFGVELAPVRQQELASVLREYLSRLPWAGQLTKQLPLSPAYFGEDGIFRHDRLRFRDFVDALEDSLEEVALKQTGDDDEVDDFEDFVFGHFFGDKALKKRSRKKEKHSWNPRVVGPREEHSRHPHHYHQG.

Over residues 1–10 (MASCPDSDNS) the composition is skewed to polar residues. The tract at residues 1–169 (MASCPDSDNS…GREPSSSQPV (169 aa)) is disordered. A phosphoserine mark is found at Ser-131, Ser-142, Ser-143, and Ser-144. Thr-148 is modified (phosphothreonine). Ser-164 carries the post-translational modification Phosphoserine. 2 coiled-coil regions span residues 270 to 350 (FLLD…RGVD) and 377 to 405 (DPSL…WQLL). Positions 446–456 (QGINTGRSPND) are enriched in polar residues. Disordered stretches follow at residues 446–565 (QGIN…NSPD) and 694–727 (LKKR…YHQG). Residues 473 to 563 (WGGKEKWRGG…QKHSWGKDNS (91 aa)) show a composition bias toward basic and acidic residues. The short motif at 486 to 506 (QKAEHWKPRKEESGQERQRSW) is the Nuclear localization signal element. The residue at position 563 (Ser-563) is a Phosphoserine. Residues 691–716 (DKALKKRSRKKEKHSWNPRVVGPREE) carry the Nuclear localization signal motif. The segment covering 694 to 703 (LKKRSRKKEK) has biased composition (basic residues).

As to quaternary structure, interacts with ESR1, PBX1, PBX2 and PBX3. Interacts with TEX11.

It is found in the cytoplasm. The protein resides in the cytoskeleton. It localises to the nucleus. In terms of biological role, regulator of pre-B-cell leukemia transcription factors (BPXs) function. Inhibits the binding of PBX1-HOX complex to DNA and blocks the transcriptional activity of E2A-PBX1. Tethers estrogen receptor-alpha (ESR1) to microtubules and allows them to influence estrogen receptors-alpha signaling. The protein is Pre-B-cell leukemia transcription factor-interacting protein 1 (Pbxip1) of Mus musculus (Mouse).